We begin with the raw amino-acid sequence, 325 residues long: D site-binding protein (325 aa).

3 disordered regions span residues 1 to 100 (MARP…PGLL), 124 to 198 (LEHG…DPDT), and 212 to 255 (LALS…EQKD). Residues 17-28 (GPTGAPPGGGAL) show a composition bias toward gly residues. 2 stretches are compositionally biased toward low complexity: residues 29 to 38 (LGLRSLLQGT) and 71 to 80 (AGPADASAGA). Residue S86 is modified to Phosphoserine. Over residues 88–100 (RGRPGAAPGPGLL) the composition is skewed to low complexity. Residues 129–153 (PPSPPPPGGPSPAPSPVRTPAPSPR) are compositionally biased toward pro residues. Over residues 166-176 (PGHAPARAALG) the composition is skewed to low complexity. Residues 221–236 (ETFDPRRHRFSEEELK) show a composition bias toward basic and acidic residues. Positions 255–318 (DEKYWSRRYK…SHYRAVLSRY (64 aa)) constitute a bZIP domain. Residues 257–279 (KYWSRRYKNNEAAKRSRDARRLK) form a basic motif region. Residues 283-297 (ISVRAAFLEKENALL) form a leucine-zipper region.

This sequence belongs to the bZIP family. PAR subfamily. As to quaternary structure, binds DNA as a homodimer or a heterodimer. Can form a heterodimer with TEF.

The protein localises to the nucleus. In terms of biological role, this transcriptional activator recognizes and binds to the sequence 5'-RTTAYGTAAY-3' found in the promoter of genes such as albumin, CYP2A4 and CYP2A5. It is not essential for circadian rhythm generation, but modulates important clock output genes. May be a direct target for regulation by the circadian pacemaker component clock. May affect circadian period and sleep regulation. This chain is D site-binding protein (DBP), found in Bos taurus (Bovine).